The following is a 980-amino-acid chain: Peroxisomal ATPase PEX6 (980 aa).

Omega-N-methylarginine is present on arginine 119. Residues 470-477 and 744-751 contribute to the ATP site; these read GPPGCGKT and GPPGTGKT.

This sequence belongs to the AAA ATPase family. In terms of assembly, interacts with PEX1; forming the PEX1-PEX6 AAA ATPase complex, which is composed of a heterohexamer formed by a trimer of PEX1-PEX6 dimers. Interacts with PEX26; interaction is direct and promotes recruitment to peroxisomal membranes. Interacts with ZFAND6. As to expression, expressed in the retina, at higher levels in the photoreceptor layer at the joint between the outer and inner segments.

It localises to the cytoplasm. Its subcellular location is the cytosol. The protein resides in the peroxisome membrane. It is found in the cell projection. The protein localises to the cilium. It localises to the photoreceptor outer segment. It catalyses the reaction ATP + H2O = ADP + phosphate + H(+). Functionally, component of the PEX1-PEX6 AAA ATPase complex, a protein dislocase complex that mediates the ATP-dependent extraction of the PEX5 receptor from peroxisomal membranes, an essential step for PEX5 recycling. Specifically recognizes PEX5 monoubiquitinated at 'Cys-11', and pulls it out of the peroxisome lumen through the PEX2-PEX10-PEX12 retrotranslocation channel. Extraction by the PEX1-PEX6 AAA ATPase complex is accompanied by unfolding of the TPR repeats and release of bound cargo from PEX5. The protein is Peroxisomal ATPase PEX6 of Homo sapiens (Human).